Consider the following 365-residue polypeptide: Histidinol-phosphate aminotransferase (365 aa).

The tract at residues 1-22 (MSRPVPNPGILDIAPYTPGKSP) is disordered. Lysine 221 carries the post-translational modification N6-(pyridoxal phosphate)lysine.

The protein belongs to the class-II pyridoxal-phosphate-dependent aminotransferase family. Histidinol-phosphate aminotransferase subfamily. Homodimer. It depends on pyridoxal 5'-phosphate as a cofactor.

It carries out the reaction L-histidinol phosphate + 2-oxoglutarate = 3-(imidazol-4-yl)-2-oxopropyl phosphate + L-glutamate. It participates in amino-acid biosynthesis; L-histidine biosynthesis; L-histidine from 5-phospho-alpha-D-ribose 1-diphosphate: step 7/9. This chain is Histidinol-phosphate aminotransferase, found in Rhodopseudomonas palustris (strain BisB5).